Consider the following 608-residue polypeptide: Serine/threonine-protein kinase BUR1 (608 aa).

In terms of domain architecture, Protein kinase spans 39 to 346 (YEIIQKLGQG…ALDALNHNYF (308 aa)). ATP-binding positions include 45–53 (LGQGTFGVV) and Lys-68. The active-site Proton acceptor is Asp-174. Disordered stretches follow at residues 383-419 (HEAN…LALP) and 443-571 (YIPK…FDED). A compositionally biased stretch (low complexity) spans 400–411 (YNNSNNYPRNRN). Residues 471–482 (LRDRSPRREGHI) show a composition bias toward basic and acidic residues. The segment covering 487-502 (STTNSNNISSNSSASN) has biased composition (low complexity). Polar residues-rich tracts occupy residues 503 to 512 (VGGTLSNPTH) and 539 to 548 (PQSSSRNVSD). The segment covering 559 to 571 (EQNESDLTDFDED) has biased composition (acidic residues).

Belongs to the protein kinase superfamily. CMGC Ser/Thr protein kinase family. CDC2/CDKX subfamily.

The protein localises to the nucleus. The enzyme catalyses L-seryl-[protein] + ATP = O-phospho-L-seryl-[protein] + ADP + H(+). It catalyses the reaction L-threonyl-[protein] + ATP = O-phospho-L-threonyl-[protein] + ADP + H(+). It carries out the reaction [DNA-directed RNA polymerase] + ATP = phospho-[DNA-directed RNA polymerase] + ADP + H(+). Serine/threonine-protein kinase involved in transcription regulation. Phosphorylates the UBC2/RAD6 ubiquitin-conjugating enzyme (E2), leading to monoubiquitination of histone H2B and the silencing of telomeric-associated genes. Also required for histone H3 methylation. Necessary for the recovery from pheromone-induced growth arrest in the cell cycle G1 phase. This Debaryomyces hansenii (strain ATCC 36239 / CBS 767 / BCRC 21394 / JCM 1990 / NBRC 0083 / IGC 2968) (Yeast) protein is Serine/threonine-protein kinase BUR1 (BUR1).